A 312-amino-acid polypeptide reads, in one-letter code: MLNIVCRVCGRQKICEKSLNLFDLVNRKYLKHLHMISGLRLVDLDDVPGFMCLCCQAELRSALAFRKLCIKTQTKWLTIEDDSSSGDEDTNDNSELESEKCAFSDFGKKKEGELVEETFQVLIEEEPMDKTLNRDAKAQLREDGIDEKCVPSQKIIKVSTKLDDQIYICELCGTHATSKPTFQRHMRKHRGERPFGCKDCDARFLSAGELRAHHRVHTGEQPFACRFCEKRYVSYMGRLIHERTHTNDRPYVCEECGKKFTTAYVLKNHMVIHTGERNFRCDICDRSFQRKAHLVTHTRSMMHLQNVKKQKS.

The ZAD domain maps to 4–79 (IVCRVCGRQK…IKTQTKWLTI (76 aa)). Residues C6, C9, C52, and C55 each coordinate Zn(2+). C2H2-type zinc fingers lie at residues 167–189 (YICELCGTHATSKPTFQRHMRKH), 195–217 (FGCKDCDARFLSAGELRAHHRVH), 223–245 (FACRFCEKRYVSYMGRLIHERTH), 251–273 (YVCEECGKKFTTAYVLKNHMVIH), and 279–303 (FRCDICDRSFQRKAHLVTHTRSMMH).

Expressed predominantly in the prothoracic gland during embryonic and larval development.

Its subcellular location is the nucleus. Functionally, transcription factor required for ecdysteroid production in the prothoracic gland by activating transcription of the ecdysteroid biosynthesis gene spok. Binds to the 5'-AGCTTTATTATTTAG-3' DNA sequence in the spok enhancer region. The protein is Transcription factor Ouib of Drosophila melanogaster (Fruit fly).